The chain runs to 260 residues: Trans-aconitate 2-methyltransferase (260 aa).

This sequence belongs to the methyltransferase superfamily. Tam family.

It localises to the cytoplasm. The enzyme catalyses trans-aconitate + S-adenosyl-L-methionine = (E)-3-(methoxycarbonyl)pent-2-enedioate + S-adenosyl-L-homocysteine. Its function is as follows. Catalyzes the S-adenosylmethionine monomethyl esterification of trans-aconitate. This chain is Trans-aconitate 2-methyltransferase, found in Paracidovorax citrulli (strain AAC00-1) (Acidovorax citrulli).